An 881-amino-acid polypeptide reads, in one-letter code: DNA mismatch repair protein MutS (881 aa).

605 to 612 (GPNMSGKS) is an ATP binding site.

It belongs to the DNA mismatch repair MutS family.

This protein is involved in the repair of mismatches in DNA. It is possible that it carries out the mismatch recognition step. This protein has a weak ATPase activity. This chain is DNA mismatch repair protein MutS, found in Limosilactobacillus reuteri subsp. reuteri (strain JCM 1112) (Lactobacillus reuteri).